A 609-amino-acid chain; its full sequence is WD repeat-containing protein 1 (609 aa).

13 WD repeats span residues 6–47 (EIKK…IRNI), 50–89 (PAIA…IWDT), 95–137 (LLKY…LWDS), 140–178 (SVGE…FFEG), 182–220 (KFKF…IYDG), 226–265 (VCAL…IWDV), 272–308 (STFN…YLDK), 313–353 (KPLR…YWDS), 360–410 (GFSG…KMDV), 434–476 (MKDK…LYSI), 482–520 (KSDD…VFSV), 525–563 (VEHN…VWTV), and 568–606 (TRIK…EWSI).

The protein belongs to the WD repeat AIP1 family.

It localises to the cytoplasm. The protein localises to the cytoskeleton. In terms of biological role, induces disassembly of actin filaments in conjunction with ADF/cofilin family proteins. Enhances cofilin-mediated actin severing. The protein is WD repeat-containing protein 1 (WDR1) of Gallus gallus (Chicken).